The chain runs to 331 residues: MESMLTLAHLQQRRSRRWLFGLTLLLLVTLLISLCAGEQWIPPGEWLSAKGQLFIWQIRLPRTLAVLLVGAALALSGAIMQALFENPLAEPGLLGISNGAGVGLIAAVLLGKGVLPGWALGLCAIFGALLITFILLRFARRHLSTSRLLLAGVALGIICSALMTWAVYFSTSFDLRQLMYWMMGGFGGVDWQQLWLMIALLPVLCWVCLQSQPLNLLALGEVSARQLGLPLWLWRKLLVVATGWMVGVSVALAGAIGFIGLVIPHILRLCGLSDHRVLLPACMMAGASALLGADIIARLALSAAELPIGVVTATLGAPVFIWLLLRSRGRG.

9 helical membrane-spanning segments follow: residues W18–E38, L64–F84, P91–G111, V114–I134, L149–F169, L194–L214, G243–I263, V277–A297, and E305–L325.

Belongs to the binding-protein-dependent transport system permease family. FecCD subfamily. The complex is composed of two ATP-binding proteins (BtuD), two transmembrane proteins (BtuC) and a solute-binding protein (BtuF).

It is found in the cell inner membrane. Functionally, part of the ABC transporter complex BtuCDF involved in vitamin B12 import. Involved in the translocation of the substrate across the membrane. The chain is Vitamin B12 import system permease protein BtuC from Klebsiella pneumoniae subsp. pneumoniae (strain ATCC 700721 / MGH 78578).